The chain runs to 380 residues: Probable dual-specificity RNA methyltransferase RlmN (380 aa).

Glutamate 123 (proton acceptor) is an active-site residue. The Radical SAM core domain occupies 129-362 (HEYGNSVCVT…VTIRREQGSD (234 aa)). Cysteines 136 and 367 form a disulfide. [4Fe-4S] cluster-binding residues include cysteine 143, cysteine 147, and cysteine 150. S-adenosyl-L-methionine-binding positions include 193–194 (GE), serine 225, 248–250 (SLH), and asparagine 324. Cysteine 367 (S-methylcysteine intermediate) is an active-site residue.

The protein belongs to the radical SAM superfamily. RlmN family. Requires [4Fe-4S] cluster as cofactor.

The protein resides in the cytoplasm. The enzyme catalyses adenosine(2503) in 23S rRNA + 2 reduced [2Fe-2S]-[ferredoxin] + 2 S-adenosyl-L-methionine = 2-methyladenosine(2503) in 23S rRNA + 5'-deoxyadenosine + L-methionine + 2 oxidized [2Fe-2S]-[ferredoxin] + S-adenosyl-L-homocysteine. The catalysed reaction is adenosine(37) in tRNA + 2 reduced [2Fe-2S]-[ferredoxin] + 2 S-adenosyl-L-methionine = 2-methyladenosine(37) in tRNA + 5'-deoxyadenosine + L-methionine + 2 oxidized [2Fe-2S]-[ferredoxin] + S-adenosyl-L-homocysteine. Functionally, specifically methylates position 2 of adenine 2503 in 23S rRNA and position 2 of adenine 37 in tRNAs. This is Probable dual-specificity RNA methyltransferase RlmN from Lysinibacillus sphaericus (strain C3-41).